Consider the following 1431-residue polypeptide: DNA-directed RNA polymerase subunit beta' (1431 aa).

Zn(2+) is bound by residues Cys66, Cys68, Cys81, and Cys84. 3 residues coordinate Mg(2+): Asp470, Asp472, and Asp474. Residues Cys813, Cys887, Cys894, and Cys897 each contribute to the Zn(2+) site.

Belongs to the RNA polymerase beta' chain family. In terms of assembly, the RNAP catalytic core consists of 2 alpha, 1 beta, 1 beta' and 1 omega subunit. When a sigma factor is associated with the core the holoenzyme is formed, which can initiate transcription. Mg(2+) serves as cofactor. It depends on Zn(2+) as a cofactor.

It carries out the reaction RNA(n) + a ribonucleoside 5'-triphosphate = RNA(n+1) + diphosphate. Functionally, DNA-dependent RNA polymerase catalyzes the transcription of DNA into RNA using the four ribonucleoside triphosphates as substrates. This is DNA-directed RNA polymerase subunit beta' from Parabacteroides distasonis (strain ATCC 8503 / DSM 20701 / CIP 104284 / JCM 5825 / NCTC 11152).